The following is a 233-amino-acid chain: Large ribosomal subunit protein uL3 (233 aa).

This sequence belongs to the universal ribosomal protein uL3 family. As to quaternary structure, part of the 50S ribosomal subunit. Forms a cluster with proteins L14 and L19.

One of the primary rRNA binding proteins, it binds directly near the 3'-end of the 23S rRNA, where it nucleates assembly of the 50S subunit. The chain is Large ribosomal subunit protein uL3 from Ureaplasma parvum serovar 3 (strain ATCC 27815 / 27 / NCTC 11736).